Here is a 106-residue protein sequence, read N- to C-terminus: NADH dehydrogenase [ubiquinone] 1 beta subcomplex subunit 10-B (106 aa).

Residues 1 to 25 (MGRKKGLPEFEESAPDGFDPENPYK) are disordered.

This sequence belongs to the complex I NDUFB10 subunit family. As to quaternary structure, complex I is composed of at least 49 different subunits.

Its subcellular location is the mitochondrion inner membrane. Its function is as follows. Accessory subunit of the mitochondrial membrane respiratory chain NADH dehydrogenase (Complex I), that is believed not to be involved in catalysis. Complex I functions in the transfer of electrons from NADH to the respiratory chain. The immediate electron acceptor for the enzyme is believed to be ubiquinone. The protein is NADH dehydrogenase [ubiquinone] 1 beta subcomplex subunit 10-B of Arabidopsis thaliana (Mouse-ear cress).